The following is a 254-amino-acid chain: Vitamin B12 import ATP-binding protein BtuD (254 aa).

Residues 3 to 239 enclose the ABC transporter domain; sequence INYISVGNRL…ENLQQVFETP (237 aa). 29 to 36 is an ATP binding site; it reads GPNGSGKS.

Belongs to the ABC transporter superfamily. Vitamin B12 importer (TC 3.A.1.13.1) family. The complex is composed of two ATP-binding proteins (BtuD), two transmembrane proteins (BtuC) and a solute-binding protein (BtuF).

The protein localises to the cell inner membrane. It catalyses the reaction an R-cob(III)alamin(out) + ATP + H2O = an R-cob(III)alamin(in) + ADP + phosphate + H(+). Part of the ABC transporter complex BtuCDF involved in vitamin B12 import. Responsible for energy coupling to the transport system. This chain is Vitamin B12 import ATP-binding protein BtuD, found in Vibrio vulnificus (strain CMCP6).